The chain runs to 1164 residues: FH1/FH2 domain-containing protein 1 (1164 aa).

The region spanning 53 to 458 is the GBD/FH3 domain; it reads AQIPAVHRLL…AAETEKQVAL (406 aa). Disordered stretches follow at residues 340–411 and 470–500; these read DIEE…VGPP and MPNE…QSPA. Over residues 355-368 the composition is skewed to basic and acidic residues; the sequence is KPSSEEGKRSRRSL. Ser-367 is subject to Phosphoserine. Residues 402-411 are compositionally biased toward low complexity; the sequence is GPASSPVGPP. Ser-486 carries the phosphoserine modification. Residues 487–615 form the FH1 domain; that stretch reads PETAPAARTP…LAAPLPHSVP (129 aa). Thr-495 carries the post-translational modification Phosphothreonine. Residues Ser-498, Ser-523, and Ser-573 each carry the phosphoserine modification. Residues 566–619 form a disordered region; sequence GKDIPAPSPPLPLLSGVPPPPPLPPPPPIKGPFPPPPPLPLAAPLPHSVPDSSA. Over residues 571–608 the composition is skewed to pro residues; it reads APSPPLPLLSGVPPPPPLPPPPPIKGPFPPPPPLPLAA. The tract at residues 612–807 is interaction with ROCK1; it reads HSVPDSSALP…AEPLFDLKVG (196 aa). Positions 616–1013 constitute an FH2 domain; the sequence is DSSALPTKRK…YRERNKTRGR (398 aa). Thr-690 is modified (phosphothreonine). Positions 884–921 form a coiled coil; the sequence is LTRCAKVDFEQLTENLGQLERRSRAAEESLRSLAKHEL. The disordered stretch occupies residues 1020 to 1143; sequence KFSGVAGEAP…NRKSLRRTLK (124 aa). Low complexity predominate over residues 1028 to 1041; the sequence is APSNPSVPVAVSSG. Positions 1053–1133 constitute a DAD domain; sequence MKSLLTSRPE…AARERKRSRG (81 aa). Polar residues predominate over residues 1073 to 1089; that stretch reads MVQSSSPIMPTVGPSTA. Positions 1127–1142 are enriched in basic residues; sequence ERKRSRGNRKSLRRTL.

This sequence belongs to the formin homology family. In terms of assembly, self-associates via the FH2 domain. Binds to F-actin via its N-terminus. Binds to the cytoplasmic domain of CD21 via its C-terminus. Interacts with ROCK1 in a Src-dependent manner. Post-translationally, phosphorylated by ROCK1. As to expression, ubiquitous. Highly expressed in spleen.

The protein resides in the cytoplasm. It is found in the cytoskeleton. Its subcellular location is the cell projection. It localises to the bleb. Functionally, required for the assembly of F-actin structures, such as stress fibers. Depends on the Rho-ROCK cascade for its activity. Contributes to the coordination of microtubules with actin fibers and plays a role in cell elongation. Acts synergistically with ROCK1 to promote SRC-dependent non-apoptotic plasma membrane blebbing. The chain is FH1/FH2 domain-containing protein 1 (FHOD1) from Homo sapiens (Human).